The sequence spans 146 residues: Large ribosomal subunit protein eL28 (146 aa).

The segment at 123 to 146 (VRAARKERSSKITFQRKAVRPKRH) is disordered.

Belongs to the eukaryotic ribosomal protein eL28 family.

This chain is Large ribosomal subunit protein eL28, found in Trypanosoma cruzi.